The primary structure comprises 73 residues: Beta-defensin 50 (73 aa).

A signal peptide spans 1 to 23 (MKTLHLLLLISGLLSVFVKGVGS). Cystine bridges form between C34-C63 and C46-C64.

This sequence belongs to the beta-defensin family.

The protein localises to the secreted. In terms of biological role, has bactericidal activity. This Rattus norvegicus (Rat) protein is Beta-defensin 50 (Defb50).